A 126-amino-acid chain; its full sequence is NADH-quinone oxidoreductase subunit A (126 aa).

Helical transmembrane passes span 11–31, 64–84, and 98–118; these read IAIQLMVTLGFISVTLLSSWL, FLVATLFVLFDVEVIFFYPWA, and EGFVKMLLFMTSLLIGFIYVI.

Belongs to the complex I subunit 3 family. In terms of assembly, NDH-1 is composed of 14 different subunits. Subunits NuoA, H, J, K, L, M, N constitute the membrane sector of the complex.

The protein resides in the cell inner membrane. It carries out the reaction a quinone + NADH + 5 H(+)(in) = a quinol + NAD(+) + 4 H(+)(out). Its function is as follows. NDH-1 shuttles electrons from NADH, via FMN and iron-sulfur (Fe-S) centers, to quinones in the respiratory chain. The immediate electron acceptor for the enzyme in this species is believed to be a menaquinone. Couples the redox reaction to proton translocation (for every two electrons transferred, four hydrogen ions are translocated across the cytoplasmic membrane), and thus conserves the redox energy in a proton gradient. The protein is NADH-quinone oxidoreductase subunit A of Cytophaga hutchinsonii (strain ATCC 33406 / DSM 1761 / CIP 103989 / NBRC 15051 / NCIMB 9469 / D465).